Reading from the N-terminus, the 407-residue chain is Arginine biosynthesis bifunctional protein ArgJ (407 aa).

Residues Thr-157, Lys-183, Thr-194, Glu-280, Asn-402, and Thr-407 each coordinate substrate. Thr-194 (nucleophile) is an active-site residue.

It belongs to the ArgJ family. Heterotetramer of two alpha and two beta chains.

The protein localises to the cytoplasm. It carries out the reaction N(2)-acetyl-L-ornithine + L-glutamate = N-acetyl-L-glutamate + L-ornithine. The catalysed reaction is L-glutamate + acetyl-CoA = N-acetyl-L-glutamate + CoA + H(+). It participates in amino-acid biosynthesis; L-arginine biosynthesis; L-ornithine and N-acetyl-L-glutamate from L-glutamate and N(2)-acetyl-L-ornithine (cyclic): step 1/1. The protein operates within amino-acid biosynthesis; L-arginine biosynthesis; N(2)-acetyl-L-ornithine from L-glutamate: step 1/4. In terms of biological role, catalyzes two activities which are involved in the cyclic version of arginine biosynthesis: the synthesis of N-acetylglutamate from glutamate and acetyl-CoA as the acetyl donor, and of ornithine by transacetylation between N(2)-acetylornithine and glutamate. The chain is Arginine biosynthesis bifunctional protein ArgJ from Bacillus cereus (strain ATCC 10987 / NRS 248).